Reading from the N-terminus, the 513-residue chain is Zinc finger CCCH-type with G patch domain-containing protein (513 aa).

Residues 155-178 form a C3H1-type zinc finger; that stretch reads PCSYYLEGECRFDETKCRFSHGAL. Residues 252 to 261 are compositionally biased toward acidic residues; the sequence is DQEEDDELSS. The tract at residues 252 to 282 is disordered; the sequence is DQEEDDELSSEESNSSMNNESSDEAESDMDD. The segment covering 262-271 has biased composition (low complexity); sequence EESNSSMNNE. Over residues 272-282 the composition is skewed to acidic residues; sequence SSDEAESDMDD. Residues 312–358 enclose the G-patch domain; sequence TRGIGSKLMEKMGYIHGTGLGSDGRGIVTPVSAQILPQGRSLDACME. Residues 478 to 495 show a composition bias toward polar residues; that stretch reads VQMQSHKQELATLQAQER. Positions 478 to 513 are disordered; that stretch reads VQMQSHKQELATLQAQERSLSKEQQTRKSKNKMFEF. Residues 496–513 are compositionally biased toward basic and acidic residues; that stretch reads SLSKEQQTRKSKNKMFEF.

The protein resides in the nucleus. Its function is as follows. Transcription repressor. In Drosophila erecta (Fruit fly), this protein is Zinc finger CCCH-type with G patch domain-containing protein.